Consider the following 199-residue polypeptide: Potassium-transporting ATPase KdpC subunit (199 aa).

The helical transmembrane segment at 21 to 43 (LALLFVCGVVYTGTVTQLGGALF) threads the bilayer.

It belongs to the KdpC family. As to quaternary structure, the system is composed of three essential subunits: KdpA, KdpB and KdpC.

The protein localises to the cell inner membrane. Its function is as follows. Part of the high-affinity ATP-driven potassium transport (or Kdp) system, which catalyzes the hydrolysis of ATP coupled with the electrogenic transport of potassium into the cytoplasm. This subunit acts as a catalytic chaperone that increases the ATP-binding affinity of the ATP-hydrolyzing subunit KdpB by the formation of a transient KdpB/KdpC/ATP ternary complex. This is Potassium-transporting ATPase KdpC subunit from Shewanella putrefaciens (strain CN-32 / ATCC BAA-453).